The sequence spans 1342 residues: DNA-directed RNA polymerase subunit beta (1342 aa).

It belongs to the RNA polymerase beta chain family. As to quaternary structure, the RNAP catalytic core consists of 2 alpha, 1 beta, 1 beta' and 1 omega subunit. When a sigma factor is associated with the core the holoenzyme is formed, which can initiate transcription.

It catalyses the reaction RNA(n) + a ribonucleoside 5'-triphosphate = RNA(n+1) + diphosphate. DNA-dependent RNA polymerase catalyzes the transcription of DNA into RNA using the four ribonucleoside triphosphates as substrates. The sequence is that of DNA-directed RNA polymerase subunit beta from Cronobacter sakazakii (strain ATCC BAA-894) (Enterobacter sakazakii).